The sequence spans 459 residues: tRNA modification GTPase MnmE (459 aa).

(6S)-5-formyl-5,6,7,8-tetrahydrofolate-binding residues include R23, E85, and R124. The TrmE-type G domain occupies 221-380; the sequence is GLSTAIIGRP…LEKAIADTFF (160 aa). Position 231 (N231) interacts with K(+). GTP-binding positions include 231-236, 250-256, and 275-278; these read NVGKSS, TEIPGTT, and DTAG. A Mg(2+)-binding site is contributed by S235. Residues T250, I252, and T255 each coordinate K(+). Residue T256 participates in Mg(2+) binding. K459 lines the (6S)-5-formyl-5,6,7,8-tetrahydrofolate pocket.

Belongs to the TRAFAC class TrmE-Era-EngA-EngB-Septin-like GTPase superfamily. TrmE GTPase family. As to quaternary structure, homodimer. Heterotetramer of two MnmE and two MnmG subunits. K(+) is required as a cofactor.

It localises to the cytoplasm. Its function is as follows. Exhibits a very high intrinsic GTPase hydrolysis rate. Involved in the addition of a carboxymethylaminomethyl (cmnm) group at the wobble position (U34) of certain tRNAs, forming tRNA-cmnm(5)s(2)U34. This chain is tRNA modification GTPase MnmE, found in Oceanobacillus iheyensis (strain DSM 14371 / CIP 107618 / JCM 11309 / KCTC 3954 / HTE831).